The chain runs to 212 residues: Adenylate kinase (212 aa).

10-15 contacts ATP; it reads GAGKGT. Positions 30–59 are NMP; sequence STGDILREAMAQETELGQKAKSYIDAGELV. AMP-binding positions include threonine 31, arginine 36, 57 to 59, 84 to 87, and glutamine 91; these read ELV and GYPR. Residues 125-158 are LID; sequence RRRVHEETGETYHLDHDPPPEDVDPDLIVQRSDD. Residues arginine 126 and 135–136 each bind ATP; that span reads TY. AMP is bound by residues arginine 155 and arginine 166. Glycine 194 lines the ATP pocket.

It belongs to the adenylate kinase family. As to quaternary structure, monomer.

It localises to the cytoplasm. The catalysed reaction is AMP + ATP = 2 ADP. It functions in the pathway purine metabolism; AMP biosynthesis via salvage pathway; AMP from ADP: step 1/1. Its function is as follows. Catalyzes the reversible transfer of the terminal phosphate group between ATP and AMP. Plays an important role in cellular energy homeostasis and in adenine nucleotide metabolism. This chain is Adenylate kinase, found in Salinibacter ruber (strain DSM 13855 / M31).